The sequence spans 407 residues: Serine/threonine transporter SstT (407 aa).

Helical transmembrane passes span 14–34 (GSLV…ATVS), 48–68 (FVGA…AASI), 82–102 (IVIL…LMSF), 141–161 (AVIT…GLAL), 192–212 (IGIF…AIAG), 218–238 (LVLL…IVFF), 290–310 (IPLG…ILTL), 316–336 (MGIQ…GVSA), and 363–383 (VAMQ…SAET).

This sequence belongs to the dicarboxylate/amino acid:cation symporter (DAACS) (TC 2.A.23) family.

The protein localises to the cell inner membrane. The catalysed reaction is L-serine(in) + Na(+)(in) = L-serine(out) + Na(+)(out). The enzyme catalyses L-threonine(in) + Na(+)(in) = L-threonine(out) + Na(+)(out). Involved in the import of serine and threonine into the cell, with the concomitant import of sodium (symport system). The sequence is that of Serine/threonine transporter SstT from Shewanella pealeana (strain ATCC 700345 / ANG-SQ1).